The following is a 376-amino-acid chain: Protein FAM199X (376 aa).

Basic and acidic residues predominate over residues 237 to 253; it reads YIKEHSPRQRSTRESWK. The disordered stretch occupies residues 237–350; the sequence is YIKEHSPRQR…QRQARKERLS (114 aa). A compositionally biased stretch (low complexity) spans 255-300; that stretch reads TSYSTASTSGVSGASVSSSSASMVSTASSTGSSGGNSASNSSANMS. The segment covering 318–337 has biased composition (basic residues); it reads DSKKRSKQRKLQQKALRKRQ. The stretch at 320-349 forms a coiled coil; that stretch reads KKRSKQRKLQQKALRKRQLKEQRQARKERL. Over residues 338–349 the composition is skewed to basic and acidic residues; the sequence is LKEQRQARKERL.

This sequence belongs to the FAM199 family.

This Xenopus tropicalis (Western clawed frog) protein is Protein FAM199X (fam199x).